The sequence spans 33 residues: uncharacterized protein (33 aa).

This is an uncharacterized protein from Staphylococcus aureus (strain MW2).